Consider the following 114-residue polypeptide: MKASYLVLIFISIFSMAQASSLSSYIVTFPKTDNMATDQNSIIEDVKKYVVDIGGKITHEYSLIKGFTVDLPDSDQILDGLKERLSYIESEYGAKCNLEKDSEVHALNRDHLVA.

An N-terminal signal peptide occupies residues 1–19 (MKASYLVLIFISIFSMAQA). Residue Ser-41 is modified to Phosphoserine.

The protein belongs to the protease inhibitor I9 family.

This is an uncharacterized protein from Saccharomyces cerevisiae (strain ATCC 204508 / S288c) (Baker's yeast).